The sequence spans 246 residues: Mast cell protease 1 (246 aa).

A signal peptide spans 1-18 (MQALLFLLALLWPPEAGA). A propeptide spans 19-20 (EE) (activation peptide). The 224-residue stretch at 21–244 (IIGGVESKPH…YVPWINLVIR (224 aa)) folds into the Peptidase S1 domain. Cys-50 and Cys-66 are disulfide-bonded. Catalysis depends on charge relay system residues His-65 and Asp-109. Disulfide bonds link Cys-143–Cys-208 and Cys-174–Cys-187. Ser-202 serves as the catalytic Charge relay system.

This sequence belongs to the peptidase S1 family. Granzyme subfamily.

The polypeptide is Mast cell protease 1 (Meriones unguiculatus (Mongolian jird)).